The chain runs to 206 residues: MKTILAVIFFGILAFAFADYPSIPKCTHPPAMANFNQKKFLEGKWYVTKAKHGSNSTVCREYRAKTKGNDQILVGDGYYSFNGGTFYFTVRCKRLPNKEVQKPLQFTCTQKSPDDPSKMFKFQLEVTILDTDYANYAVMYRCVQFPEELGSHFEDNTLLLHRKLDQLVDENLIERKLKLSLPSFKSRDDVVEGCRELPSKKKKTKP.

The N-terminal stretch at 1–18 (MKTILAVIFFGILAFAFA) is a signal peptide. N-linked (GlcNAc...) asparagine glycosylation occurs at asparagine 55.

It belongs to the calycin superfamily. Triabin family. In terms of assembly, interacts with host coagulation factor XII (F12) (inactive and activated) (via amino acids 1-77). Interacts with host high molecular weight kininogen (KNG1) (via amino acids 402-532). As to expression, salivary gland (at protein level).

The protein resides in the secreted. With respect to regulation, zn(2+) modulates binding to host coagulation factor XII (F12) and high molecular weight kininogen (KNG1). Its function is as follows. Suppresses activation of the host plasma kallikrein-kinin system, leading to inhibition of the intrinsic coagulation pathway. Blocks host coagulation factor XII (F12) and prekallikrein (KLKB1) reciprocal activation without affecting their amidolytic activities. Blocks binding of host F12 and high molecular weight kininogen (KNG1) to negatively charged surfaces. Attenuates generation of bradykinin by interfering with activation of host kallikrein-kinin system. The polypeptide is Triafestin-1 (Triatoma infestans (Assassin bug)).